The following is a 218-amino-acid chain: Imidazole glycerol phosphate synthase subunit HisH (218 aa).

Residues 1–213 enclose the Glutamine amidotransferase type-1 domain; sequence MTTIIDYGIG…AALPTTEEAG (213 aa). Cys-79 serves as the catalytic Nucleophile. Active-site residues include His-188 and Glu-190.

In terms of assembly, heterodimer of HisH and HisF.

The protein localises to the cytoplasm. It catalyses the reaction 5-[(5-phospho-1-deoxy-D-ribulos-1-ylimino)methylamino]-1-(5-phospho-beta-D-ribosyl)imidazole-4-carboxamide + L-glutamine = D-erythro-1-(imidazol-4-yl)glycerol 3-phosphate + 5-amino-1-(5-phospho-beta-D-ribosyl)imidazole-4-carboxamide + L-glutamate + H(+). The enzyme catalyses L-glutamine + H2O = L-glutamate + NH4(+). It functions in the pathway amino-acid biosynthesis; L-histidine biosynthesis; L-histidine from 5-phospho-alpha-D-ribose 1-diphosphate: step 5/9. Functionally, IGPS catalyzes the conversion of PRFAR and glutamine to IGP, AICAR and glutamate. The HisH subunit catalyzes the hydrolysis of glutamine to glutamate and ammonia as part of the synthesis of IGP and AICAR. The resulting ammonia molecule is channeled to the active site of HisF. The polypeptide is Imidazole glycerol phosphate synthase subunit HisH (Salinibacter ruber (strain DSM 13855 / M31)).